Reading from the N-terminus, the 521-residue chain is Histidine--tRNA ligase (521 aa).

L-histidine contacts are provided by residues 137 to 139 (DLT), Arg164, Gln180, Asp184, Arg338, and 342 to 343 (YY).

It belongs to the class-II aminoacyl-tRNA synthetase family.

The enzyme catalyses tRNA(His) + L-histidine + ATP = L-histidyl-tRNA(His) + AMP + diphosphate + H(+). Functionally, involved in protein synthesis. Catalyzes the specific attachment of an amino acid to its cognate tRNA in a 2 step reaction: the amino acid (AA) is first activated by ATP to form AA-AMP and then transferred to the acceptor end of the tRNA. Required for germ cell development. The sequence is that of Histidine--tRNA ligase from Caenorhabditis elegans.